The sequence spans 737 residues: Angiotensin-converting enzyme-like protein Ace3 (737 aa).

A signal peptide spans 1-23 (MNLPWALLLVLLSHRQLLPWLRT). At 24 to 639 (VGETSLNDFY…TDTEPEQAYL (616 aa)) the chain is on the extracellular side. Residues 32 to 611 (FYSEAQAKLF…VKQGDTLGWP (580 aa)) enclose the Peptidase M2 domain. Cys-146 and Cys-152 are disulfide-bonded. Chloride contacts are provided by Arg-180 and Tyr-218. A disulfide bond links Cys-346 and Cys-364. His-377 and His-381 together coordinate Zn(2+). Asn-390 carries an N-linked (GlcNAc...) asparagine glycan. Residue Glu-405 participates in Zn(2+) binding. 3 residues coordinate chloride: Trp-479, Arg-483, and Arg-516. An intrachain disulfide couples Cys-532 to Cys-544. Residues 640 to 660 (GQWVLLSMSFFMLVLILALGF) traverse the membrane as a helical segment. At 661 to 700 (RLHYLEKQLLDEDTMILKTLPYSYFLGIAMEPHQAARKQW) the chain is on the cytoplasmic side. A helical membrane pass occupies residues 701–721 (LLLGLCCILMLCCIGLLIRIV). The Extracellular segment spans residues 722–737 (TQNTENTPWMKNEGQS).

The protein belongs to the peptidase M2 family. Interacts with IZUMO1. The cofactor is Zn(2+). In terms of tissue distribution, expressed in sperm and testis (at protein level). Expressed in heart and testis. Not detected in kidney, lung, liver, brain, ovary, spleen and thymus.

The protein localises to the cytoplasmic vesicle. The protein resides in the secretory vesicle. It is found in the acrosome membrane. The sequence is that of Angiotensin-converting enzyme-like protein Ace3 from Mus musculus (Mouse).